The sequence spans 492 residues: Aspartyl/glutamyl-tRNA(Asn/Gln) amidotransferase subunit B (492 aa).

It belongs to the GatB/GatE family. GatB subfamily. Heterotrimer of A, B and C subunits.

The catalysed reaction is L-glutamyl-tRNA(Gln) + L-glutamine + ATP + H2O = L-glutaminyl-tRNA(Gln) + L-glutamate + ADP + phosphate + H(+). It carries out the reaction L-aspartyl-tRNA(Asn) + L-glutamine + ATP + H2O = L-asparaginyl-tRNA(Asn) + L-glutamate + ADP + phosphate + 2 H(+). Functionally, allows the formation of correctly charged Asn-tRNA(Asn) or Gln-tRNA(Gln) through the transamidation of misacylated Asp-tRNA(Asn) or Glu-tRNA(Gln) in organisms which lack either or both of asparaginyl-tRNA or glutaminyl-tRNA synthetases. The reaction takes place in the presence of glutamine and ATP through an activated phospho-Asp-tRNA(Asn) or phospho-Glu-tRNA(Gln). The polypeptide is Aspartyl/glutamyl-tRNA(Asn/Gln) amidotransferase subunit B (Dehalococcoides mccartyi (strain ATCC BAA-2266 / KCTC 15142 / 195) (Dehalococcoides ethenogenes (strain 195))).